A 442-amino-acid chain; its full sequence is Chromosomal replication initiator protein DnaA (442 aa).

A domain I, interacts with DnaA modulators region spans residues methionine 1–alanine 84. Residues alanine 84–asparagine 105 form a domain II region. The domain III, AAA+ region stretch occupies residues asparagine 106 to alanine 322. Glycine 150, glycine 152, lysine 153, and threonine 154 together coordinate ATP. A domain IV, binds dsDNA region spans residues glutamine 323–asparagine 442.

It belongs to the DnaA family. As to quaternary structure, oligomerizes as a right-handed, spiral filament on DNA at oriC.

It is found in the cytoplasm. Plays an essential role in the initiation and regulation of chromosomal replication. ATP-DnaA binds to the origin of replication (oriC) to initiate formation of the DNA replication initiation complex once per cell cycle. Binds the DnaA box (a 9 base pair repeat at the origin) and separates the double-stranded (ds)DNA. Forms a right-handed helical filament on oriC DNA; dsDNA binds to the exterior of the filament while single-stranded (ss)DNA is stabiized in the filament's interior. The ATP-DnaA-oriC complex binds and stabilizes one strand of the AT-rich DNA unwinding element (DUE), permitting loading of DNA polymerase. After initiation quickly degrades to an ADP-DnaA complex that is not apt for DNA replication. Binds acidic phospholipids. This chain is Chromosomal replication initiator protein DnaA, found in Methylococcus capsulatus (strain ATCC 33009 / NCIMB 11132 / Bath).